A 591-amino-acid chain; its full sequence is tRNA 5-methylaminomethyl-2-thiouridine biosynthesis bifunctional protein MnmC (591 aa).

Positions 1-232 (MTPTAPSPLV…KRERLEAWRP (232 aa)) are tRNA (mnm(5)s(2)U34)-methyltransferase. The interval 247-591 (IGGGIAGAAL…FDSPVTRSRL (345 aa)) is FAD-dependent cmnm(5)s(2)U34 oxidoreductase.

In the N-terminal section; belongs to the methyltransferase superfamily. tRNA (mnm(5)s(2)U34)-methyltransferase family. The protein in the C-terminal section; belongs to the DAO family. It depends on FAD as a cofactor.

The protein resides in the cytoplasm. The catalysed reaction is 5-aminomethyl-2-thiouridine(34) in tRNA + S-adenosyl-L-methionine = 5-methylaminomethyl-2-thiouridine(34) in tRNA + S-adenosyl-L-homocysteine + H(+). In terms of biological role, catalyzes the last two steps in the biosynthesis of 5-methylaminomethyl-2-thiouridine (mnm(5)s(2)U) at the wobble position (U34) in tRNA. Catalyzes the FAD-dependent demodification of cmnm(5)s(2)U34 to nm(5)s(2)U34, followed by the transfer of a methyl group from S-adenosyl-L-methionine to nm(5)s(2)U34, to form mnm(5)s(2)U34. This is tRNA 5-methylaminomethyl-2-thiouridine biosynthesis bifunctional protein MnmC from Caulobacter vibrioides (strain ATCC 19089 / CIP 103742 / CB 15) (Caulobacter crescentus).